The following is a 384-amino-acid chain: Probable 2-heptyl-3-hydroxy-4(1H)-quinolone synthase AqdB2 (384 aa).

This sequence belongs to the 3-hydroxybenzoate 6-hydroxylase family.

The enzyme catalyses 2-heptyl-4(1H)-quinolone + NADH + O2 + H(+) = 2-heptyl-3-hydroxy-4(1H)-quinolone + NAD(+) + H2O. Its function is as follows. Involved in the degradation of the Pseudomonas aeruginosa quorum sensing signal molecule HHQ (2-heptyl-4-quinolone) to anthranilic acid. Probably catalyzes the hydroxylation of HHQ to PQS (2-heptyl-3-hydroxy-4-quinolone). This chain is Probable 2-heptyl-3-hydroxy-4(1H)-quinolone synthase AqdB2, found in Rhodococcus erythropolis (Arthrobacter picolinophilus).